A 176-amino-acid polypeptide reads, in one-letter code: Cytidylate kinase (176 aa).

7–15 (GPPGSGTTS) is a binding site for ATP.

This sequence belongs to the cytidylate kinase family. Type 2 subfamily.

It is found in the cytoplasm. The enzyme catalyses CMP + ATP = CDP + ADP. The catalysed reaction is dCMP + ATP = dCDP + ADP. The sequence is that of Cytidylate kinase from Methanosphaerula palustris (strain ATCC BAA-1556 / DSM 19958 / E1-9c).